Here is a 363-residue protein sequence, read N- to C-terminus: Peptide chain release factor 1 (363 aa).

At glutamine 237 the chain carries N5-methylglutamine. A compositionally biased stretch (basic and acidic residues) spans 284-296; it reads EDEKRRSAEESTR. The tract at residues 284–306 is disordered; that stretch reads EDEKRRSAEESTRRSLVASGDRS.

It belongs to the prokaryotic/mitochondrial release factor family. Post-translationally, methylated by PrmC. Methylation increases the termination efficiency of RF1.

Its subcellular location is the cytoplasm. Functionally, peptide chain release factor 1 directs the termination of translation in response to the peptide chain termination codons UAG and UAA. This chain is Peptide chain release factor 1, found in Shewanella oneidensis (strain ATCC 700550 / JCM 31522 / CIP 106686 / LMG 19005 / NCIMB 14063 / MR-1).